The following is a 154-amino-acid chain: Prefoldin subunit 5 (154 aa).

Ala-2 carries the post-translational modification N-acetylalanine. Lys-42 bears the N6-acetyllysine mark. A Phosphoserine modification is found at Ser-56.

The protein belongs to the prefoldin subunit alpha family. As to quaternary structure, heterohexamer of two PFD-alpha type and four PFD-beta type subunits.

The protein resides in the nucleus. In terms of biological role, binds specifically to cytosolic chaperonin (c-CPN) and transfers target proteins to it. Binds to nascent polypeptide chain and promotes folding in an environment in which there are many competing pathways for nonnative proteins. Represses the transcriptional activity of MYC. This is Prefoldin subunit 5 (Pfdn5) from Mus musculus (Mouse).